The primary structure comprises 339 residues: Serine/threonine-protein kinase SRK2J (339 aa).

A Protein kinase domain is found at tyrosine 4–phenylalanine 260. ATP contacts are provided by residues leucine 10–alanine 18 and lysine 33. Aspartate 123 acts as the Proton acceptor in catalysis. Residues serine 308–alanine 339 are disordered. Residues aspartate 320 to alanine 339 show a composition bias toward acidic residues.

Belongs to the protein kinase superfamily. Ser/Thr protein kinase family. As to expression, expressed in seedlings.

The enzyme catalyses L-seryl-[protein] + ATP = O-phospho-L-seryl-[protein] + ADP + H(+). It carries out the reaction L-threonyl-[protein] + ATP = O-phospho-L-threonyl-[protein] + ADP + H(+). In Arabidopsis thaliana (Mouse-ear cress), this protein is Serine/threonine-protein kinase SRK2J (SRK2J).